Consider the following 632-residue polypeptide: Epithelial sodium channel subunit alpha (632 aa).

Residues 1–49 lie on the Cytoplasmic side of the membrane; it reads MTKEEKNEKEALIEFFSSYRELFEFFCSNTTIHGAIRLVCSRRNRMKTA. Residues 50–70 form a helical membrane-spanning segment; sequence FWLVLFLVTFGLMYWQFGLLF. The Extracellular segment spans residues 71-520; the sequence is GQYFSYPVSI…SQWSLWFGSS (450 aa). Intrachain disulfides connect Cys97/Cys264, Cys189/Cys196, Cys241/Cys248, Cys355/Cys440, Cys377/Cys417, Cys377/Cys436, Cys381/Cys432, Cys390/Cys417, Cys390/Cys440, and Cys392/Cys406. Residues 521–541 form a helical membrane-spanning segment; that stretch reads VLSVVEMLELVIDFVIIGVMI. At 542–632 the chain is on the cytoplasmic side; that stretch reads LLHRYYYKKA…YYEENGGRRN (91 aa). Over residues 612–622 the composition is skewed to low complexity; it reads SRSSSMRSNRS. Residues 612-632 form a disordered region; it reads SRSSSMRSNRSYYEENGGRRN. A compositionally biased stretch (basic and acidic residues) spans 623-632; sequence YYEENGGRRN.

This sequence belongs to the amiloride-sensitive sodium channel (TC 1.A.6) family. SCNN1A subfamily. In terms of assembly, heterotrimer; containing an alpha/SCNN1A, a beta/SCNN1B and a gamma/SCNN1G subunit. Interacts with shroom1.

It localises to the apical cell membrane. It is found in the cell projection. The protein resides in the cilium. The protein localises to the cytoplasmic granule. Its subcellular location is the cytoplasm. It localises to the cytoplasmic vesicle. It is found in the secretory vesicle. The protein resides in the acrosome. The protein localises to the flagellum. The catalysed reaction is Na(+)(in) = Na(+)(out). Its activity is regulated as follows. Originally identified and characterized by its inhibition by the diuretic drug amiloride. This is one of the three pore-forming subunits of the heterotrimeric epithelial sodium channel (ENaC), a critical regulator of sodium balance and fluid homeostasis. ENaC operates in epithelial tissues, where it mediates the electrodiffusion of sodium ions from extracellular fluid through the apical membrane of cells, with water following osmotically. It plays a key role in maintaining sodium homeostasis through electrogenic sodium reabsorption in the kidneys. This chain is Epithelial sodium channel subunit alpha, found in Xenopus laevis (African clawed frog).